The sequence spans 148 residues: Gametocyte-specific factor 1-like (148 aa).

2 consecutive CHHC U11-48K-type zinc fingers follow at residues 6–33 (FEIC…RRKN) and 40–67 (MATC…VNRS). Residues cysteine 9, histidine 15, histidine 25, cysteine 29, cysteine 43, histidine 49, histidine 59, and cysteine 63 each coordinate Zn(2+). Positions 67 to 99 (SAVEEEDTENPLKVSPPSSEQNDDTQQVSPCLP) are disordered. Residues 82 to 95 (PPSSEQNDDTQQVS) show a composition bias toward polar residues.

It belongs to the UPF0224 (FAM112) family.

This chain is Gametocyte-specific factor 1-like (GTSF1L), found in Homo sapiens (Human).